The primary structure comprises 65 residues: Beta-toxin Am IT (65 aa).

Glu1 carries the post-translational modification Pyrrolidone carboxylic acid (Glu); partial. Positions 1-64 constitute an LCN-type CS-alpha/beta domain; it reads EHGYLLDKYT…LWNYKTNKCK (64 aa). 4 cysteine pairs are disulfide-bonded: Cys12-Cys63, Cys16-Cys38, Cys23-Cys45, and Cys27-Cys47. Residue Ser65 is modified to Serine amide.

This sequence belongs to the long (4 C-C) scorpion toxin superfamily. Sodium channel inhibitor family. Expressed by the venom gland.

It is found in the secreted. Its function is as follows. Has a toxic effect on insects and mammals. On German cockroach larvae, it provokes contraction, paralysis and lethality. Intracerebroventricular injection into mice causes severe neurotoxic symptoms. It fully competes with the binding of the iodinated Css4 (AC P60266) on rat brain synaptosomes, with moderate affinity and in a concentration-dependent manner (EC(50)=25 nM). It may act on both site 3 and site 4 of voltage-gated sodium channels. The chain is Beta-toxin Am IT from Androctonus mauritanicus mauritanicus (Scorpion).